A 374-amino-acid chain; its full sequence is Patatin-2-Kuras 4 (374 aa).

A signal peptide spans 1-11 (MILATTSSTCA). Residues 20 to 217 (LSIDGGGIKG…TVGDPALLSL (198 aa)) enclose the PNPLA domain. The GXGXXG signature appears at 24-29 (GGGIKG). A GXSXG motif is present at residues 63 to 67 (GTSTG). Ser-65 (nucleophile) is an active-site residue. Asn-103 is a glycosylation site (N-linked (GlcNAc...) asparagine). The active-site Proton acceptor is the Asp-203. The short motif at 203–205 (DGG) is the DGA/G element. A coiled-coil region spans residues 309-372 (ENALTGTTTE…DRKKLRANKA (64 aa)).

Belongs to the patatin family.

Its subcellular location is the vacuole. In terms of biological role, probable lipolytic acyl hydrolase (LAH), an activity which is thought to be involved in the response of tubers to pathogens. This is Patatin-2-Kuras 4 (pat2-k4) from Solanum tuberosum (Potato).